A 51-amino-acid chain; its full sequence is Protein YrhD (51 aa).

This Escherichia coli (strain K12) protein is Protein YrhD (yrhD).